A 1500-amino-acid chain; its full sequence is Carbamoyl-phosphate synthase [ammonia], mitochondrial (1500 aa).

The N-terminal 38 residues, 1–38, are a transit peptide targeting the mitochondrion; it reads MTRILTAFKVVRTLKTGFGFTNVTAHQKWKFSRPGIRL. The interval 39 to 218 is anthranilate phosphoribosyltransferase homolog; that stretch reads LSVKAQTAHI…VKVYGKGNPT (180 aa). Residues K55, K57, and K119 each carry the N6-acetyllysine; alternate modification. At K55 the chain carries N6-glutaryllysine; alternate. An N6-succinyllysine; alternate mark is found at K55, K57, and K119. Residue S148 is modified to Phosphoserine. K157 and K171 each carry N6-acetyllysine; alternate. K157 bears the N6-succinyllysine; alternate mark. K171 is subject to N6-glutaryllysine; alternate. K176 is subject to N6-glutaryllysine. An N6-acetyllysine mark is found at K182 and K197. N6-acetyllysine; alternate occurs at positions 207, 210, 214, 219, and 228. 5 positions are modified to N6-glutaryllysine; alternate: K207, K210, K214, K219, and K228. At K207 the chain carries N6-succinyllysine; alternate. K214 bears the N6-succinyllysine; alternate mark. Positions 219 to 404 constitute a Glutamine amidotransferase type-1 domain; sequence KVVAVDCGIK…FSLIKKGKAT (186 aa). K237 bears the N6-glutaryllysine mark. N6-acetyllysine; alternate occurs at positions 280, 287, 307, and 310. At K280 the chain carries N6-glutaryllysine; alternate. K287 and K307 each carry N6-succinyllysine; alternate. N6-glutaryllysine; alternate is present on residues K307 and K310. K400 bears the N6-succinyllysine mark. N6-glutaryllysine; alternate occurs at positions 402, 412, 453, and 458. N6-succinyllysine; alternate is present on residues K402 and K412. 6 positions are modified to N6-acetyllysine; alternate: K412, K453, K458, K522, K527, and K532. An N6-succinyllysine; alternate mark is found at K458, K522, and K527. N6-glutaryllysine; alternate occurs at positions 527 and 532. At S537 the chain carries Phosphoserine; alternate. S537 is a glycosylation site (O-linked (GlcNAc) serine; alternate). Residue S540 is modified to Phosphoserine. One can recognise an ATP-grasp 1 domain in the interval 551 to 743; sequence SDKLNEINEK…LAFIAAKIAL (193 aa). K553 and K560 each carry N6-acetyllysine; alternate. The residue at position 553 (K553) is an N6-glutaryllysine; alternate. 2 positions are modified to N6-succinyllysine; alternate: K553 and K560. S569 is modified (phosphoserine). N6-acetyllysine; alternate occurs at positions 575 and 612. An N6-succinyllysine; alternate mark is found at K575 and K612. K630 is subject to N6-acetyllysine. K728 carries the post-translational modification N6-glutaryllysine. 6 positions are modified to N6-acetyllysine; alternate: K751, K757, K772, K793, K811, and K831. Residues K751 and K757 each carry the N6-succinyllysine; alternate modification. K757, K772, K793, and K811 each carry N6-glutaryllysine; alternate. An N6-succinyllysine; alternate modification is found at K793. K831 is modified (N6-succinyllysine; alternate). S835 is modified (phosphoserine). An N6-acetyllysine; alternate mark is found at K841 and K856. N6-glutaryllysine; alternate occurs at positions 841 and 856. An N6-glutaryllysine modification is found at K869. K875, K889, and K892 each carry N6-acetyllysine; alternate. N6-glutaryllysine; alternate occurs at positions 875, 889, and 892. N6-succinyllysine; alternate is present on residues K875, K889, and K892. Residues S896 and S898 each carry the phosphoserine modification. K905 bears the N6-glutaryllysine mark. An N6-acetyllysine; alternate mark is found at K908, K915, and K919. N6-glutaryllysine; alternate is present on residues K908, K915, and K919. K915 and K919 each carry N6-succinyllysine; alternate. Position 935 is an N6-acetyllysine (K935). A Phosphoserine modification is found at S1036. At K1074 the chain carries N6-acetyllysine; alternate. K1074 carries the post-translational modification N6-glutaryllysine; alternate. K1074 carries the N6-succinyllysine; alternate modification. Residues S1079, S1090, and S1093 each carry the phosphoserine modification. An ATP-grasp 2 domain is found at 1093–1284; sequence SAVLDELKVA…FIDVATKVMI (192 aa). At K1100 the chain carries N6-acetyllysine; alternate. K1100 carries the N6-succinyllysine; alternate modification. N6-succinyllysine is present on K1149. K1150 carries the post-translational modification N6-glutaryllysine. 2 positions are modified to N6-acetyllysine; alternate: K1168 and K1183. 2 positions are modified to N6-glutaryllysine; alternate: K1168 and K1183. 2 positions are modified to N6-succinyllysine; alternate: K1168 and K1183. Position 1203 is a phosphoserine (S1203). K1222 carries the post-translational modification N6-acetyllysine. K1224 carries the post-translational modification N6-glutaryllysine. N6-acetyllysine; alternate is present on residues K1232, K1269, and K1291. K1232, K1269, and K1291 each carry N6-succinyllysine; alternate. S1331 is a glycosylation site (O-linked (GlcNAc) serine). O-linked (GlcNAc) threonine glycosylation occurs at T1332. The MGS-like domain maps to 1355–1500; it reads FKIPQKGILI…YRQYSAGKAA (146 aa). N6-acetyllysine; alternate is present on K1356. N6-glutaryllysine; alternate occurs at positions 1356 and 1360. K1356 and K1360 each carry N6-succinyllysine; alternate. The N-acetyl-L-glutamate site is built by T1391, T1394, and W1410. Phosphoserine occurs at positions 1419 and 1431. N1437 and N1440 together coordinate N-acetyl-L-glutamate. K1444 is modified (N6-acetyllysine; alternate). K1444 carries the N6-succinyllysine; alternate modification. N-acetyl-L-glutamate is bound at residue N1449. N6-acetyllysine; alternate occurs at positions 1471, 1479, and 1486. An N6-succinyllysine; alternate mark is found at K1471, K1479, and K1486. N6-glutaryllysine; alternate occurs at positions 1479 and 1486.

In terms of assembly, can form homooligomers (monomers as predominant form and dimers). In terms of processing, undergoes proteolytic cleavage in the C-terminal region corresponding to the loss of approximately 12 AA residues from the C-terminus. Post-translationally, succinylated at Lys-287 and Lys-1291. Desuccinylated at Lys-1291 by SIRT5, leading to activation. Glutarylated. Glutarylation levels increase during fasting. Deglutarylated by SIRT5 at Lys-55, Lys-219, Lys-412, Lys-889, Lys-892, Lys-915, Lys-1360 and Lys-1486, leading to activation. Primarily in the liver and small intestine.

Its subcellular location is the mitochondrion. The protein resides in the nucleus. It is found in the nucleolus. The protein localises to the cell membrane. The enzyme catalyses hydrogencarbonate + NH4(+) + 2 ATP = carbamoyl phosphate + 2 ADP + phosphate + 2 H(+). With respect to regulation, requires N-acetyl-L-glutamate (NAG) as an allosteric activator. Activated by glycerol in the absence of NAG, whereas in the presence of NAG it is inhibited by increasing concentrations of glycerol. Involved in the urea cycle of ureotelic animals where the enzyme plays an important role in removing excess ammonia from the cell. The sequence is that of Carbamoyl-phosphate synthase [ammonia], mitochondrial (CPS1) from Homo sapiens (Human).